A 302-amino-acid chain; its full sequence is Nucleotide-binding protein SERP0433 (302 aa).

18–25 (GMSGAGKS) provides a ligand contact to ATP. Position 69-72 (69-72 (DLRG)) interacts with GTP.

This sequence belongs to the RapZ-like family.

Functionally, displays ATPase and GTPase activities. The sequence is that of Nucleotide-binding protein SERP0433 from Staphylococcus epidermidis (strain ATCC 35984 / DSM 28319 / BCRC 17069 / CCUG 31568 / BM 3577 / RP62A).